The chain runs to 257 residues: Hydroxyacylglutathione hydrolase (257 aa).

Zn(2+)-binding residues include H55, H57, D59, H60, H112, D129, and H167.

It belongs to the metallo-beta-lactamase superfamily. Glyoxalase II family. In terms of assembly, monomer. Zn(2+) is required as a cofactor.

It catalyses the reaction an S-(2-hydroxyacyl)glutathione + H2O = a 2-hydroxy carboxylate + glutathione + H(+). Its pathway is secondary metabolite metabolism; methylglyoxal degradation; (R)-lactate from methylglyoxal: step 2/2. Thiolesterase that catalyzes the hydrolysis of S-D-lactoyl-glutathione to form glutathione and D-lactic acid. The sequence is that of Hydroxyacylglutathione hydrolase from Pseudoalteromonas translucida (strain TAC 125).